The sequence spans 288 residues: Ribosomal RNA small subunit methyltransferase A (288 aa).

Asn-28, Leu-30, Gly-55, Glu-76, Asp-101, and Asn-130 together coordinate S-adenosyl-L-methionine.

The protein belongs to the class I-like SAM-binding methyltransferase superfamily. rRNA adenine N(6)-methyltransferase family. RsmA subfamily.

It localises to the cytoplasm. It catalyses the reaction adenosine(1518)/adenosine(1519) in 16S rRNA + 4 S-adenosyl-L-methionine = N(6)-dimethyladenosine(1518)/N(6)-dimethyladenosine(1519) in 16S rRNA + 4 S-adenosyl-L-homocysteine + 4 H(+). Functionally, specifically dimethylates two adjacent adenosines (A1518 and A1519) in the loop of a conserved hairpin near the 3'-end of 16S rRNA in the 30S particle. May play a critical role in biogenesis of 30S subunits. This chain is Ribosomal RNA small subunit methyltransferase A, found in Moorella thermoacetica (strain ATCC 39073 / JCM 9320).